Here is a 229-residue protein sequence, read N- to C-terminus: Putative germin-like protein 12-3 (229 aa).

The first 22 residues, 1-22 (MASSNFFLLIPLIALVTTQAMA), serve as a signal peptide directing secretion. A disulfide bridge connects residues cysteine 32 and cysteine 47. A Cupin type-1 domain is found at 62–217 (ANLDKPMDIT…AFQVDKKAVD (156 aa)). Asparagine 78 carries N-linked (GlcNAc...) asparagine glycosylation. Residues histidine 111, histidine 113, glutamate 118, and histidine 162 each contribute to the Mn(2+) site.

Belongs to the germin family. As to quaternary structure, oligomer (believed to be a pentamer but probably hexamer).

It is found in the secreted. The protein resides in the extracellular space. Its subcellular location is the apoplast. May play a role in plant defense. Probably has no oxalate oxidase activity even if the active site is conserved. The chain is Putative germin-like protein 12-3 from Oryza sativa subsp. japonica (Rice).